The chain runs to 146 residues: Ribonuclease P protein component (146 aa).

It belongs to the RnpA family. As to quaternary structure, consists of a catalytic RNA component (M1 or rnpB) and a protein subunit.

The catalysed reaction is Endonucleolytic cleavage of RNA, removing 5'-extranucleotides from tRNA precursor.. RNaseP catalyzes the removal of the 5'-leader sequence from pre-tRNA to produce the mature 5'-terminus. It can also cleave other RNA substrates such as 4.5S RNA. The protein component plays an auxiliary but essential role in vivo by binding to the 5'-leader sequence and broadening the substrate specificity of the ribozyme. The protein is Ribonuclease P protein component of Chlorobium phaeobacteroides (strain DSM 266 / SMG 266 / 2430).